A 406-amino-acid chain; its full sequence is CinA-like protein (406 aa).

It belongs to the CinA family.

This is CinA-like protein from Deinococcus geothermalis (strain DSM 11300 / CIP 105573 / AG-3a).